Here is a 693-residue protein sequence, read N- to C-terminus: Phosphoribosylformylglycinamidine synthase subunit PurL (693 aa).

Histidine 34 is a catalytic residue. Residues tyrosine 37 and lysine 76 each coordinate ATP. Glutamate 78 contacts Mg(2+). Substrate contacts are provided by residues 79–82 (SHNH) and arginine 101. The active-site Proton acceptor is histidine 80. Aspartate 102 lines the Mg(2+) pocket. Glutamine 222 provides a ligand contact to substrate. Aspartate 248 contributes to the Mg(2+) binding site. Residue 292–294 (ETQ) participates in substrate binding. Residues aspartate 470 and glycine 507 each coordinate ATP. Serine 510 contacts substrate.

It belongs to the FGAMS family. Monomer. Part of the FGAM synthase complex composed of 1 PurL, 1 PurQ and 2 PurS subunits.

It localises to the cytoplasm. The catalysed reaction is N(2)-formyl-N(1)-(5-phospho-beta-D-ribosyl)glycinamide + L-glutamine + ATP + H2O = 2-formamido-N(1)-(5-O-phospho-beta-D-ribosyl)acetamidine + L-glutamate + ADP + phosphate + H(+). It functions in the pathway purine metabolism; IMP biosynthesis via de novo pathway; 5-amino-1-(5-phospho-D-ribosyl)imidazole from N(2)-formyl-N(1)-(5-phospho-D-ribosyl)glycinamide: step 1/2. In terms of biological role, part of the phosphoribosylformylglycinamidine synthase complex involved in the purines biosynthetic pathway. Catalyzes the ATP-dependent conversion of formylglycinamide ribonucleotide (FGAR) and glutamine to yield formylglycinamidine ribonucleotide (FGAM) and glutamate. The FGAM synthase complex is composed of three subunits. PurQ produces an ammonia molecule by converting glutamine to glutamate. PurL transfers the ammonia molecule to FGAR to form FGAM in an ATP-dependent manner. PurS interacts with PurQ and PurL and is thought to assist in the transfer of the ammonia molecule from PurQ to PurL. The chain is Phosphoribosylformylglycinamidine synthase subunit PurL from Pyrobaculum neutrophilum (strain DSM 2338 / JCM 9278 / NBRC 100436 / V24Sta) (Thermoproteus neutrophilus).